Here is a 235-residue protein sequence, read N- to C-terminus: Aspartate/glutamate leucyltransferase (235 aa).

It belongs to the R-transferase family. Bpt subfamily.

The protein localises to the cytoplasm. It catalyses the reaction N-terminal L-glutamyl-[protein] + L-leucyl-tRNA(Leu) = N-terminal L-leucyl-L-glutamyl-[protein] + tRNA(Leu) + H(+). The enzyme catalyses N-terminal L-aspartyl-[protein] + L-leucyl-tRNA(Leu) = N-terminal L-leucyl-L-aspartyl-[protein] + tRNA(Leu) + H(+). In terms of biological role, functions in the N-end rule pathway of protein degradation where it conjugates Leu from its aminoacyl-tRNA to the N-termini of proteins containing an N-terminal aspartate or glutamate. This is Aspartate/glutamate leucyltransferase from Pseudomonas aeruginosa (strain LESB58).